The sequence spans 105 residues: Integration host factor subunit beta (105 aa).

This sequence belongs to the bacterial histone-like protein family. In terms of assembly, heterodimer of an alpha and a beta chain.

Functionally, this protein is one of the two subunits of integration host factor, a specific DNA-binding protein that functions in genetic recombination as well as in transcriptional and translational control. The sequence is that of Integration host factor subunit beta from Nitrosomonas europaea (strain ATCC 19718 / CIP 103999 / KCTC 2705 / NBRC 14298).